Here is a 480-residue protein sequence, read N- to C-terminus: UDP-N-acetylmuramate--L-alanine ligase (480 aa).

125–131 contributes to the ATP binding site; sequence GTHGKTT.

Belongs to the MurCDEF family.

It is found in the cytoplasm. It carries out the reaction UDP-N-acetyl-alpha-D-muramate + L-alanine + ATP = UDP-N-acetyl-alpha-D-muramoyl-L-alanine + ADP + phosphate + H(+). The protein operates within cell wall biogenesis; peptidoglycan biosynthesis. Functionally, cell wall formation. The polypeptide is UDP-N-acetylmuramate--L-alanine ligase (Ectopseudomonas mendocina (strain ymp) (Pseudomonas mendocina)).